The following is a 129-amino-acid chain: Small ribosomal subunit protein uS11 (129 aa).

This sequence belongs to the universal ribosomal protein uS11 family. In terms of assembly, part of the 30S ribosomal subunit. Interacts with proteins S7 and S18. Binds to IF-3.

Located on the platform of the 30S subunit, it bridges several disparate RNA helices of the 16S rRNA. Forms part of the Shine-Dalgarno cleft in the 70S ribosome. The protein is Small ribosomal subunit protein uS11 of Maridesulfovibrio salexigens (strain ATCC 14822 / DSM 2638 / NCIMB 8403 / VKM B-1763) (Desulfovibrio salexigens).